The chain runs to 821 residues: Integrator complex assembly factor BRAT1 (821 aa).

The tract at residues 100 to 200 (PGLFGEPGPL…WPACAQKIMD (101 aa)) is required for interaction with NDFIP1. 2 HEAT repeats span residues 495 to 531 (PQFL…SRHW) and 544 to 576 (SEVP…SSQG). The tract at residues 741–767 (GSPNTASAEATLPRWRAGEQAQPPGDQ) is disordered. Position 742 is a phosphoserine (serine 742). The short motif at 819-821 (DCY) is the BRAT1-like motif element. Residue cysteine 820 coordinates Zn(2+).

Belongs to the BRAT1 family. As to quaternary structure, part of the multiprotein complex composed of BRAT1, WDR73, as well as integrator complex subunits INTS9 and INTS11. Interacts with BRCA1 and ATM. Interacts with MTOR and RPTOR. Interacts with NDFIP1. Interacts with SMC1A and PRKDC. Ubiquitinated by NEDD4, NEDD4L and ITCH; mono- and polyubiquitinated forms are detected. Ubiquitously expressed.

Its subcellular location is the nucleus. The protein localises to the cytoplasm. Component of a multiprotein complex required for the assembly of the RNA endonuclease module of the integrator complex. Associates with INTS9 and INTS11 in the cytoplasm and blocks the active site of INTS11 to inhibit the endonuclease activity of INTS11 before formation of the full integrator complex. Following dissociation of WDR73 of the complex, BRAT1 facilitates the nuclear import of the INTS9-INTS11 heterodimer. In the nucleus, INTS4 is integrated to the INTS9-INTS11 heterodimer and BRAT1 is released from the mature RNA endonuclease module by inositol hexakisphosphate (InsP6). BRAT1 is also involved in DNA damage response; activates kinases ATM, SMC1A and PRKDC by modulating their phosphorylation status following ionizing radiation (IR) stress. Plays a role in regulating mitochondrial function and cell proliferation. Required for protein stability of MTOR and MTOR-related proteins, and cell cycle progress by growth factors. The chain is Integrator complex assembly factor BRAT1 from Homo sapiens (Human).